A 932-amino-acid polypeptide reads, in one-letter code: MYCBP-associated protein (932 aa).

Disordered regions lie at residues 1–39 and 165–187; these read MMKKITERQSPLKLLEKKRAKAPEQPTPPIQEEPEPVSN and EEPKPKPPKEEERPSPWAPPPQH. Positions 165–178 are enriched in basic and acidic residues; the sequence is EEPKPKPPKEEERP. At Ser559 the chain carries Phosphoserine. Thr560 carries the phosphothreonine modification. At Ser566 the chain carries Phosphoserine. A disordered region spans residues 789–886; it reads LPDEQGQKSP…TAPSQEPIDP (98 aa). The span at 795–806 shows a compositional bias: polar residues; the sequence is QKSPPVTESKVT. Positions 810-869 are enriched in basic and acidic residues; that stretch reads AGKEDRRGGAQEKKQLGTKDKDDKRGSKTPGKEDRPNSKKLKPKDDKKVVKSASRDRLLS.

Interacts with MYCBP.

The protein resides in the cytoplasm. Its subcellular location is the membrane. Its function is as follows. May play a role in spermatogenesis. May be involved in synaptic processes. The polypeptide is MYCBP-associated protein (Mus musculus (Mouse)).